We begin with the raw amino-acid sequence, 362 residues long: Phosphoserine aminotransferase (362 aa).

Arg43 serves as a coordination point for L-glutamate. Pyridoxal 5'-phosphate is bound by residues 77 to 78, Trp103, Thr153, Asp173, and Gln196; that span reads AR. Lys197 carries the post-translational modification N6-(pyridoxal phosphate)lysine.

Belongs to the class-V pyridoxal-phosphate-dependent aminotransferase family. SerC subfamily. As to quaternary structure, homodimer. Pyridoxal 5'-phosphate is required as a cofactor.

The protein resides in the cytoplasm. The enzyme catalyses O-phospho-L-serine + 2-oxoglutarate = 3-phosphooxypyruvate + L-glutamate. It catalyses the reaction 4-(phosphooxy)-L-threonine + 2-oxoglutarate = (R)-3-hydroxy-2-oxo-4-phosphooxybutanoate + L-glutamate. It functions in the pathway amino-acid biosynthesis; L-serine biosynthesis; L-serine from 3-phospho-D-glycerate: step 2/3. It participates in cofactor biosynthesis; pyridoxine 5'-phosphate biosynthesis; pyridoxine 5'-phosphate from D-erythrose 4-phosphate: step 3/5. Its function is as follows. Catalyzes the reversible conversion of 3-phosphohydroxypyruvate to phosphoserine and of 3-hydroxy-2-oxo-4-phosphonooxybutanoate to phosphohydroxythreonine. This Legionella pneumophila (strain Corby) protein is Phosphoserine aminotransferase.